Here is a 340-residue protein sequence, read N- to C-terminus: tRNA N6-adenosine threonylcarbamoyltransferase (340 aa).

Fe cation contacts are provided by His111 and His115. Substrate contacts are provided by residues 134 to 138 (LVSGG), Asp167, Gly180, and Asn276. Asp304 contributes to the Fe cation binding site.

This sequence belongs to the KAE1 / TsaD family. Fe(2+) serves as cofactor.

Its subcellular location is the cytoplasm. The catalysed reaction is L-threonylcarbamoyladenylate + adenosine(37) in tRNA = N(6)-L-threonylcarbamoyladenosine(37) in tRNA + AMP + H(+). Its function is as follows. Required for the formation of a threonylcarbamoyl group on adenosine at position 37 (t(6)A37) in tRNAs that read codons beginning with adenine. Is involved in the transfer of the threonylcarbamoyl moiety of threonylcarbamoyl-AMP (TC-AMP) to the N6 group of A37, together with TsaE and TsaB. TsaD likely plays a direct catalytic role in this reaction. The sequence is that of tRNA N6-adenosine threonylcarbamoyltransferase from Helicobacter pylori (strain G27).